The primary structure comprises 859 residues: Kinesin-like protein KIN-14T (859 aa).

A Kinesin motor domain is found at 91–411 (NIRVFCRVKP…LNFATRAKNI (321 aa)). Residue 168–175 (GQTGTGKT) participates in ATP binding. The stretch at 422-463 (QAKKEAVMMNLQKMMEKIEQEREMSLRKMRNLNETLEKLTGK) forms a coiled coil. Positions 511 to 530 (LSGADFSVTPNSSSFKSRRN) are disordered. Residues 518–530 (VTPNSSSFKSRRN) are compositionally biased toward polar residues.

The protein belongs to the TRAFAC class myosin-kinesin ATPase superfamily. Kinesin family. KIN-14 subfamily.

The chain is Kinesin-like protein KIN-14T from Arabidopsis thaliana (Mouse-ear cress).